The chain runs to 122 residues: Large ribosomal subunit protein uL14 (122 aa).

It belongs to the universal ribosomal protein uL14 family. In terms of assembly, part of the 50S ribosomal subunit. Forms a cluster with proteins L3 and L19. In the 70S ribosome, L14 and L19 interact and together make contacts with the 16S rRNA in bridges B5 and B8.

Binds to 23S rRNA. Forms part of two intersubunit bridges in the 70S ribosome. The protein is Large ribosomal subunit protein uL14 of Ralstonia nicotianae (strain ATCC BAA-1114 / GMI1000) (Ralstonia solanacearum).